Here is a 442-residue protein sequence, read N- to C-terminus: 26S proteasome non-ATPase regulatory subunit 12 homolog B (442 aa).

The stretch at 1–129 forms a coiled coil; that stretch reads MEESRQLESS…KEEQGLIAEA (129 aa). Positions 232 to 403 constitute a PCI domain; it reads EICRSYKAIY…GIICFQIVKD (172 aa).

It belongs to the proteasome subunit p55 family. Component of the 19S regulatory particle (RP/PA700) lid subcomplex of the 26S proteasome. The 26S proteasome is composed of a core protease (CP), known as the 20S proteasome, capped at one or both ends by the 19S regulatory particle (RP/PA700). The RP/PA700 complex is composed of at least 17 different subunits in two subcomplexes, the base and the lid, which form the portions proximal and distal to the 20S proteolytic core, respectively. Ubiquitous with highest expression in flowers.

It is found in the cytoplasm. The protein resides in the nucleus. In terms of biological role, acts as a regulatory subunit of the 26 proteasome which is involved in the ATP-dependent degradation of ubiquitinated proteins. Acts redundantly with RPN5A. The protein is 26S proteasome non-ATPase regulatory subunit 12 homolog B (RPN5B) of Arabidopsis thaliana (Mouse-ear cress).